Consider the following 339-residue polypeptide: Dihydroorotate dehydrogenase (quinone) (339 aa).

FMN-binding positions include 62-66 and T86; that span reads AGMDK. Residue K66 coordinates substrate. Substrate is bound at residue 111–115; the sequence is NRMGF. FMN contacts are provided by N139 and N172. N172 serves as a coordination point for substrate. Residue S175 is the Nucleophile of the active site. N177 provides a ligand contact to substrate. Residues K217 and T245 each coordinate FMN. Substrate is bound at residue 246-247; it reads NT. Residues G268, G297, and 318–319 each bind FMN; that span reads YS.

This sequence belongs to the dihydroorotate dehydrogenase family. Type 2 subfamily. As to quaternary structure, monomer. FMN serves as cofactor.

The protein localises to the cell membrane. It carries out the reaction (S)-dihydroorotate + a quinone = orotate + a quinol. The protein operates within pyrimidine metabolism; UMP biosynthesis via de novo pathway; orotate from (S)-dihydroorotate (quinone route): step 1/1. Functionally, catalyzes the conversion of dihydroorotate to orotate with quinone as electron acceptor. The polypeptide is Dihydroorotate dehydrogenase (quinone) (Shewanella baltica (strain OS155 / ATCC BAA-1091)).